Reading from the N-terminus, the 344-residue chain is Putative replication factor C small subunit L499 (344 aa).

57–64 (GPSGSGKT) is a binding site for ATP.

The protein belongs to the activator 1 small subunits family. RfcS subfamily.

Part of the RFC clamp loader complex which loads the PCNA sliding clamp onto DNA. The protein is Putative replication factor C small subunit L499 of Acanthamoeba polyphaga mimivirus (APMV).